The following is a 28-amino-acid chain: uncharacterized protein (28 aa).

This is an uncharacterized protein from Spiroplasma virus 4 (SpV4).